The following is a 341-amino-acid chain: Ribosomal RNA small subunit methyltransferase C (341 aa).

This sequence belongs to the methyltransferase superfamily. RsmC family. Monomer.

It is found in the cytoplasm. It catalyses the reaction guanosine(1207) in 16S rRNA + S-adenosyl-L-methionine = N(2)-methylguanosine(1207) in 16S rRNA + S-adenosyl-L-homocysteine + H(+). Its function is as follows. Specifically methylates the guanine in position 1207 of 16S rRNA in the 30S particle. In Shewanella amazonensis (strain ATCC BAA-1098 / SB2B), this protein is Ribosomal RNA small subunit methyltransferase C.